Reading from the N-terminus, the 284-residue chain is Ubiquinone biosynthesis protein COQ4, mitochondrial (284 aa).

Zn(2+) is bound by residues His-165, Asp-166, His-169, and Glu-181.

This sequence belongs to the COQ4 family. In terms of assembly, component of a multi-subunit COQ enzyme complex, composed of at least COQ3, COQ4, COQ5, COQ6, COQ7 and COQ9. The cofactor is Zn(2+).

Its subcellular location is the mitochondrion inner membrane. It catalyses the reaction a 4-hydroxy-3-methoxy-5-(all-trans-polyprenyl)benzoate + H(+) = a 2-methoxy-6-(all-trans-polyprenyl)phenol + CO2. Its pathway is cofactor biosynthesis; ubiquinone biosynthesis. Its function is as follows. Lyase that catalyzes the C1-decarboxylation of 4-hydroxy-3-methoxy-5-(all-trans-polyprenyl)benzoic acid into 2-methoxy-6-(all-trans-polyprenyl)phenol during ubiquinone biosynthesis. The sequence is that of Ubiquinone biosynthesis protein COQ4, mitochondrial from Ajellomyces dermatitidis (strain ER-3 / ATCC MYA-2586) (Blastomyces dermatitidis).